The chain runs to 109 residues: Tyrosine-protein phosphatase 16 (109 aa).

Positions 1–109 (WRMVTEHTST…RIKTQKPIVV (109 aa)) constitute a Tyrosine-protein phosphatase domain. Position 81 (D81) interacts with substrate.

This sequence belongs to the protein-tyrosine phosphatase family.

It carries out the reaction O-phospho-L-tyrosyl-[protein] + H2O = L-tyrosyl-[protein] + phosphate. This chain is Tyrosine-protein phosphatase 16 (STY-16), found in Styela plicata (Wrinkled sea squirt).